Here is a 363-residue protein sequence, read N- to C-terminus: Oxygen-dependent coproporphyrinogen-III oxidase (363 aa).

Ser-119 contributes to the substrate binding site. 2 residues coordinate a divalent metal cation: His-123 and His-133. The active-site Proton donor is the His-133. 135–137 contacts substrate; it reads NYR. 2 residues coordinate a divalent metal cation: His-167 and His-197. Positions 287–322 are important for dimerization; sequence YVEFNLVWDRGTIFGLQTNGRTESILMSLPPLVRWE.

Belongs to the aerobic coproporphyrinogen-III oxidase family. In terms of assembly, homodimer. Requires a divalent metal cation as cofactor.

The protein localises to the cytoplasm. The catalysed reaction is coproporphyrinogen III + O2 + 2 H(+) = protoporphyrinogen IX + 2 CO2 + 2 H2O. It functions in the pathway porphyrin-containing compound metabolism; protoporphyrin-IX biosynthesis; protoporphyrinogen-IX from coproporphyrinogen-III (O2 route): step 1/1. Involved in the heme and chlorophyll biosynthesis. Catalyzes the aerobic oxidative decarboxylation of propionate groups of rings A and B of coproporphyrinogen-III to yield the vinyl groups in protoporphyrinogen-IX. This Parasynechococcus marenigrum (strain WH8102) protein is Oxygen-dependent coproporphyrinogen-III oxidase.